Reading from the N-terminus, the 395-residue chain is HCLS1-binding protein 3 (395 aa).

The residue at position 1 (methionine 1) is an N-acetylmethionine. Position 3 is a phosphoserine (serine 3). The 124-residue stretch at 19–142 folds into the PX domain; it reads GLDLSVPQHQ…EFLGTRAPGA (124 aa). 2 disordered regions span residues 143 to 310 and 322 to 374; these read TGLA…KELF and LGSE…AMDE. Acidic residues predominate over residues 162-174; the sequence is DSDEAFDFFEQQD. At serine 191 the chain carries Phosphoserine. Residues 194–206 show a composition bias toward acidic residues; the sequence is GEEEEEEEEEEVL. 2 stretches are compositionally biased toward basic and acidic residues: residues 249–260 and 299–310; these read SDKKVSETRRPL and RPEHGDASKELF. Serine 254 is subject to Phosphoserine. Pro residues predominate over residues 329 to 339; that stretch reads KPQTKPKPLVP. Position 341 is an N6-acetyllysine (lysine 341).

In terms of assembly, binds HCLS1. Interacts with the SH3 domain of HCLS1 in vitro. In terms of tissue distribution, ubiquitously expressed.

Functionally, may be a modulator of IL-2 signaling. The polypeptide is HCLS1-binding protein 3 (Hs1bp3) (Mus musculus (Mouse)).